The following is a 257-amino-acid chain: UPF0246 protein Shewana3_3143 (257 aa).

It belongs to the UPF0246 family.

This is UPF0246 protein Shewana3_3143 from Shewanella sp. (strain ANA-3).